We begin with the raw amino-acid sequence, 350 residues long: Phenylalanine--tRNA ligase alpha subunit (350 aa).

Position 260 (E260) interacts with Mg(2+).

This sequence belongs to the class-II aminoacyl-tRNA synthetase family. Phe-tRNA synthetase alpha subunit type 1 subfamily. In terms of assembly, tetramer of two alpha and two beta subunits. The cofactor is Mg(2+).

The protein localises to the cytoplasm. It catalyses the reaction tRNA(Phe) + L-phenylalanine + ATP = L-phenylalanyl-tRNA(Phe) + AMP + diphosphate + H(+). The polypeptide is Phenylalanine--tRNA ligase alpha subunit (Mesoplasma florum (strain ATCC 33453 / NBRC 100688 / NCTC 11704 / L1) (Acholeplasma florum)).